Here is a 131-residue protein sequence, read N- to C-terminus: uncharacterized protein (131 aa).

A disordered region spans residues 1 to 67 (MCSARKLLRG…HSGEPIGDDY (67 aa)). Position 14 is a phosphoserine (Ser-14). Residues 99 to 119 (VVVLFFWLMLWFLGLQALGLV) form a helical membrane-spanning segment.

This sequence belongs to the FAM241 family.

It is found in the membrane. This is an uncharacterized protein from Mus musculus (Mouse).